The sequence spans 591 residues: L-fucose isomerase (591 aa).

Active-site proton acceptor residues include E337 and D361. Mn(2+) contacts are provided by E337, D361, and H528.

The protein belongs to the L-fucose isomerase family. In terms of assembly, homohexamer. It depends on Mn(2+) as a cofactor.

The protein localises to the cytoplasm. The enzyme catalyses L-fucose = L-fuculose. It functions in the pathway carbohydrate degradation; L-fucose degradation; L-lactaldehyde and glycerone phosphate from L-fucose: step 1/3. Converts the aldose L-fucose into the corresponding ketose L-fuculose. The protein is L-fucose isomerase of Klebsiella pneumoniae (strain 342).